An 834-amino-acid polypeptide reads, in one-letter code: Glycerol-3-phosphate acyltransferase (834 aa).

The HXXXXD motif signature appears at 309–314 (CHRSHI).

The protein belongs to the GPAT/DAPAT family.

The protein resides in the cell inner membrane. It catalyses the reaction sn-glycerol 3-phosphate + an acyl-CoA = a 1-acyl-sn-glycero-3-phosphate + CoA. Its pathway is phospholipid metabolism; CDP-diacylglycerol biosynthesis; CDP-diacylglycerol from sn-glycerol 3-phosphate: step 1/3. The protein is Glycerol-3-phosphate acyltransferase of Pseudomonas fluorescens (strain Pf0-1).